The chain runs to 27 residues: Delta-conotoxin TsVIA (27 aa).

3 disulfide bridges follow: cysteine 1-cysteine 17, cysteine 8-cysteine 21, and cysteine 16-cysteine 25.

Belongs to the conotoxin O1 superfamily. Expressed by the venom duct.

The protein localises to the secreted. Delta-conotoxins bind to site 6 of voltage-gated sodium channels (Nav) and inhibit the inactivation process. This toxin inhibits tetrodotoxin(TTX)-sensitive sodium channels. A test on mouse Nav1.6/SCN8A confirms this sensitivity. The chain is Delta-conotoxin TsVIA from Conus tessulatus (Tessellate cone).